The following is a 953-amino-acid chain: MIDGAPPSDPPEPSQHEELPDRLRVHSLARTLGTTSRRVLDALTALDGRVRSAHSTVDRVDAVRVRDLLATHLETAGVLAASVHAPEASEEPESRLMLETQETRNADVERPHYMPLFVAPQPIPEPLADDEDVDDGPDYVADDSDADDEGQLDRPANRRRRRGRRGRGRGRGEQGGSDGDPVDQQSEPRAQQFTSADAAETDDGDDRDSEDTEAGDNGEDENGSLEAGNRRRRRRRRRKSASGDDNDAALEGPLPDDPPNTVVHERVPRAGDKAGNSQDGGSGSTEIKGIDGSTRLEAKRQRRRDGRDAGRRRPPVLSEAEFLARREAVERVMVVRDRVRTEPPLPGTRYTQIAVLEDGIVVEHFVTSAASASLVGNIYLGIVQNVLPSMEAAFVDIGRGRNGVLYAGEVNWDAAGLGGADRKIEQALKPGDYVVVQVSKDPVGHKGARLTTQVSLAGRFLVYVPGASSTGISRKLPDTERQRLKEILREVVPSDAGVIIRTASEGVKEDDIRADVARLRERWEQIEAKAQETKEKAAGAAVALYEEPDVLVKVIRDLFNEDFVGLIVSGDEAWNTINEYVNSVAPELVSKLTKYESADGPDGQSAPDVFTVHRIDEQLAKAMDRKVWLPSGGTLVIDRTEAMTVIDVNTGKFTGAGGNLEQTVTKNNLEAAEEIVRQLRLRDIGGIVVIDFIDMVLESNRDLVLRRLTESLARDRTRHQVSEVTSLGLVQLTRKRLGTGLIEAFSTSCPNCSGRGILLHADPVDSAAATGRKSEPGARRGKRSKKSRSEESSDRSMVAKVPVHAPGEHPMFKAMAAGLSSLAGRGDEESGEPAAELAEQAGDQPPTDLDDTAQADFEDTEDTDEDEDELDADEDLEDLDDEDLDEDLDVEDSDSDDEDSDEDAADADVDEEDAAGLDGSPGEVDVPGVTELAPTRPRRRVAGRPAGPPIRLD.

2 disordered regions span residues 1-23 (MIDGAPPSDPPEPSQHEELPDRL) and 118-314 (VAPQ…RRRP). The span at 14–23 (SQHEELPDRL) shows a compositional bias: basic and acidic residues. The span at 127 to 150 (LADDEDVDDGPDYVADDSDADDEG) shows a compositional bias: acidic residues. Residues 157-169 (NRRRRRGRRGRGR) are compositionally biased toward basic residues. Residues 183–193 (DQQSEPRAQQF) show a composition bias toward polar residues. Residues 199–223 (AETDDGDDRDSEDTEAGDNGEDENG) show a composition bias toward acidic residues. Residues 230–240 (RRRRRRRRRKS) are compositionally biased toward basic residues. 2 stretches are compositionally biased toward basic and acidic residues: residues 263–272 (VHERVPRAGD) and 294–311 (TRLEAKRQRRRDGRDAGR). The region spanning 376-453 (GNIYLGIVQN…GHKGARLTTQ (78 aa)) is the S1 motif domain. Mg(2+) is bound by residues Asp-647 and Asp-691. Positions 749 and 752 each coordinate Zn(2+). Disordered stretches follow at residues 766-808 (SAAA…APGE) and 822-953 (LAGR…IRLD). The span at 848-915 (DLDDTAQADF…DADVDEEDAA (68 aa)) shows a compositional bias: acidic residues.

The protein belongs to the RNase E/G family. As to quaternary structure, assembles into a homotetramer formed by a dimer of dimers. Interacts with DNA-binding protein HU (hupB). Requires Mg(2+) as cofactor. Zn(2+) is required as a cofactor.

The protein resides in the cytoplasm. The catalysed reaction is Endonucleolytic cleavage of single-stranded RNA in A- and U-rich regions.. Functionally, endoribonuclease that plays a central role in RNA processing and decay. Plays a major role in pre-16S rRNA maturation, probably generating the mature 5'-end, and a minor role in pre-5S and pre-23S rRNA maturation. Probably also processes tRNA. RNase E and HupB jointly contribute to cellular adaptation to changing growth conditions and survival during antibiotic treatment and in the host. The polypeptide is Ribonuclease E (Mycobacterium tuberculosis (strain ATCC 25618 / H37Rv)).